The following is a 592-amino-acid chain: Arginine--tRNA ligase (592 aa).

A 'HIGH' region motif is present at residues Ala129–His139.

The protein belongs to the class-I aminoacyl-tRNA synthetase family. In terms of assembly, monomer.

Its subcellular location is the cytoplasm. It catalyses the reaction tRNA(Arg) + L-arginine + ATP = L-arginyl-tRNA(Arg) + AMP + diphosphate. The protein is Arginine--tRNA ligase of Dichelobacter nodosus (strain VCS1703A).